A 141-amino-acid chain; its full sequence is Hemoglobin subunit alpha (141 aa).

The Globin domain occupies 1 to 141; the sequence is VLSDEDKTNV…VSTVLTSKYR (141 aa). A Phosphoserine modification is found at Ser-3. Lys-7 carries the post-translational modification N6-succinyllysine. Thr-8 is subject to Phosphothreonine. Lys-11 bears the N6-succinyllysine mark. N6-acetyllysine; alternate is present on Lys-16. N6-succinyllysine; alternate is present on Lys-16. Tyr-24 carries the post-translational modification Phosphotyrosine. Position 35 is a phosphoserine (Ser-35). Lys-40 is modified (N6-succinyllysine). Ser-49 bears the Phosphoserine mark. Position 58 (His-58) interacts with O2. His-87 provides a ligand contact to heme b. Phosphoserine is present on Ser-102. Thr-108 carries the post-translational modification Phosphothreonine. Ser-124 and Ser-131 each carry phosphoserine. Residues Thr-134 and Thr-137 each carry the phosphothreonine modification. At Ser-138 the chain carries Phosphoserine.

The protein belongs to the globin family. As to quaternary structure, heterotetramer of two alpha chains and two beta chains. In terms of tissue distribution, red blood cells.

Functionally, involved in oxygen transport from the lung to the various peripheral tissues. Its function is as follows. Hemopressin acts as an antagonist peptide of the cannabinoid receptor CNR1. Hemopressin-binding efficiently blocks cannabinoid receptor CNR1 and subsequent signaling. The polypeptide is Hemoglobin subunit alpha (HBA) (Trichechus inunguis (Amazon manatee)).